A 124-amino-acid chain; its full sequence is Small ribosomal subunit protein uS12c (124 aa).

2 disordered regions span residues 1–28 and 104–124; these read MPTI…KGCP and ASGV…QPKT. Basic residues-rich tracts occupy residues 11-20 and 109-124; these read ERHKSSKKTK and DRKK…QPKT.

It belongs to the universal ribosomal protein uS12 family. Part of the 30S ribosomal subunit.

The protein resides in the plastid. Its subcellular location is the chloroplast. Its function is as follows. With S4 and S5 plays an important role in translational accuracy. Located at the interface of the 30S and 50S subunits. This is Small ribosomal subunit protein uS12c (rps12) from Gracilaria tenuistipitata var. liui (Red alga).